The primary structure comprises 877 residues: Potassium transporter 23 (877 aa).

2 disordered regions span residues 1–60 (MDDD…SLDG) and 72–92 (ASAG…RASS). Topologically, residues 1–126 (MDDDDSGIQE…RGAHGHSSKE (126 aa)) are cytoplasmic. Pro residues predominate over residues 12–28 (PAPPPPPPPPPPPPPPL). Positions 76–86 (GASGGGGGGGP) are enriched in gly residues. Residues 127–147 (ISMLSTVAMAFQTLGVVYGDM) form a helical membrane-spanning segment. Over 148–173 (GTSPLYVFSDVFSKVPIKSEVEILGA) the chain is Extracellular. Residues 174 to 194 (LSLVMYTIALIPFAKYVFIVL) form a helical membrane-spanning segment. Residues 195–260 (KANDNGEGGT…SLEKNPVFKN (66 aa)) are Cytoplasmic-facing. The helical transmembrane segment at 261 to 281 (ILLFLVLMGTSMVIGDGILTP) threads the bilayer. The Extracellular portion of the chain corresponds to 282-295 (SMSVMSAVSGLQGR). The helical transmembrane segment at 296-316 (VPGFGTDAVVIVSILFLVLLF) threads the bilayer. Topologically, residues 317–325 (SVQRFGTGK) are cytoplasmic. Residues 326-346 (VGFMFAPILALWFINLGTIGI) form a helical membrane-spanning segment. Over 347–379 (YNLAKYDISVVRAFNPVYIYLFFQTNGIKAWSA) the chain is Extracellular. The helical transmembrane segment at 380 to 400 (LGGCVLCITGAEAMFADLGHF) threads the bilayer. Topologically, residues 401-406 (SVKSIQ) are cytoplasmic. Residues 407–427 (VAFTAVVFPCLLIAYMGQAAY) form a helical membrane-spanning segment. Residues 428–441 (LMKYPFAVERIFYD) are Extracellular-facing. Residues 442–462 (SVPEILFWPVFVIATLAAMIA) traverse the membrane as a helical segment. The Cytoplasmic segment spans residues 463 to 498 (SQAMISATFSCIKQAMALGCFPRIKIIHTSKKVMGQ). A helical membrane pass occupies residues 499 to 519 (IYIPVMNWFLMVMCIIIVATF). Topologically, residues 520–524 (RSTND) are extracellular. Residues 525–545 (IANAYGIAEVGVMMVSTALVT) form a helical membrane-spanning segment. The Cytoplasmic portion of the chain corresponds to 546-555 (LVMLLIWQTN). A helical membrane pass occupies residues 556–578 (LFLVMCFPVIFGSVEFVYLTAVL). Topologically, residues 579 to 583 (SKIQE) are extracellular. Residues 584-604 (GGWLPLAFSSLFLCIMYTWNY) form a helical membrane-spanning segment. Residues 605 to 877 (GSVLKYQSEM…IMRVGMTYMV (273 aa)) are Cytoplasmic-facing.

The protein belongs to the HAK/KUP transporter (TC 2.A.72.3) family.

It localises to the membrane. In terms of biological role, high-affinity potassium transporter. The protein is Potassium transporter 23 (HAK23) of Oryza sativa subsp. japonica (Rice).